The primary structure comprises 345 residues: Ferrochelatase (345 aa).

Fe cation is bound by residues His-215 and Glu-296.

The protein belongs to the ferrochelatase family.

It localises to the cytoplasm. The catalysed reaction is heme b + 2 H(+) = protoporphyrin IX + Fe(2+). It functions in the pathway porphyrin-containing compound metabolism; protoheme biosynthesis; protoheme from protoporphyrin-IX: step 1/1. Functionally, catalyzes the ferrous insertion into protoporphyrin IX. The polypeptide is Ferrochelatase (Rhodopseudomonas palustris (strain ATCC BAA-98 / CGA009)).